Here is a 344-residue protein sequence, read N- to C-terminus: E3 ubiquitin-protein ligase RING2-A (344 aa).

An interaction with HIP2 region spans residues 2-181 (ATPVNAQCSS…EDNCDSRSHV (180 aa)). An RING-type zinc finger spans residues 48–88 (CPICLDMLKNTMTTKECLHRFCSDCIVTALRSGNKECPTCR). Residues 90 to 95 (KLVSKR) are interaction with nucleosomes via an acidic patch on histone H2A and histone H2B. Residues 148-230 (QAMHRAQRVR…DPPGGGETGS (83 aa)) form a disordered region. The segment covering 180–192 (HVSNPSVHSNQEA) has biased composition (polar residues).

In terms of assembly, component of chromatin-associated Polycomb (PcG) complexes. Component of a PRC1-like complex. Component of some MLL1/MLL complex.

The protein resides in the nucleus. Its subcellular location is the cytoplasm. It localises to the chromosome. It catalyses the reaction S-ubiquitinyl-[E2 ubiquitin-conjugating enzyme]-L-cysteine + [acceptor protein]-L-lysine = [E2 ubiquitin-conjugating enzyme]-L-cysteine + N(6)-ubiquitinyl-[acceptor protein]-L-lysine.. It functions in the pathway protein modification; protein ubiquitination. Functionally, E3 ubiquitin-protein ligase that mediates monoubiquitination of 'Lys-119' of histone H2A (H2AK119Ub), thereby playing a central role in histone code and gene regulation. H2AK119Ub gives a specific tag for epigenetic transcriptional repression. Essential component of a Polycomb group (PcG) multiprotein PRC1-like complex, a complex class required to maintain the transcriptionally repressive state of many genes, including Hox genes, throughout development. PcG PRC1 complex acts via chromatin remodeling and modification of histones, rendering chromatin heritably changed in its expressibility. The sequence is that of E3 ubiquitin-protein ligase RING2-A (rnf2-a) from Xenopus laevis (African clawed frog).